The chain runs to 63 residues: Crotasin (63 aa).

The N-terminal stretch at M1–A22 is a signal peptide. 3 cysteine pairs are disulfide-bonded: C26–C56, C33–C50, and C38–C57.

Highly expressed in pancreas, heart, liver, brain and kidney. Expressed to a low extent in the venom gland.

The protein localises to the secreted. The chain is Crotasin from Crotalus durissus terrificus (South American rattlesnake).